The following is a 117-amino-acid chain: G antigen 6 (117 aa).

The segment at 1–117 (MSWRGRSTYY…PEEGEKQSQC (117 aa)) is disordered. 2 stretches are compositionally biased toward acidic residues: residues 32–45 (FSDE…EEGE) and 87–96 (ECEDGPDGQE). Residues 103–117 (EEVKTPEEGEKQSQC) are compositionally biased toward basic and acidic residues.

This sequence belongs to the GAGE family. In terms of tissue distribution, expressed in a variety of tumor tissues but not in normal tissues, except testis.

The polypeptide is G antigen 6 (GAGE6) (Homo sapiens (Human)).